Consider the following 261-residue polypeptide: RING finger and CHY zinc finger domain-containing protein 1 (261 aa).

The CHY-type zinc-finger motif lies at 13–80 (QERGQRGCEH…AQQTCEECST (68 aa)). 24 residues coordinate Zn(2+): Cys-20, His-22, Cys-33, Cys-34, Cys-40, Cys-43, His-44, His-50, Cys-62, Cys-65, Cys-75, Cys-78, Cys-87, Cys-90, His-101, Cys-102, Cys-105, Cys-108, His-118, Cys-119, Cys-122, Cys-125, His-134, and Cys-136. A CTCHY-type zinc finger spans residues 82-144 (FGEYYCDICH…KCIENVSRQN (63 aa)). The segment at 145 to 189 (CPICLEDIHTSRVVAHVLPCGHLLHRTCYEEMLKEGYRCPLCMHS) adopts an RING-type zinc-finger fold. Residue Ser-257 is modified to Phosphoserine.

Monomer and homodimer. Interacts with AR, MDM2, KAT5, PLAG1, PLAGL2, COPE, UBE2D2 and GORAB/NTKLBP1. Post-translationally, subject to ubiquitination and proteasomal degradation. Interaction with PLAGL2 or KAT5 enhances protein stability.

The protein localises to the nucleus. The protein resides in the nucleus speckle. It is found in the cytoplasm. The catalysed reaction is S-ubiquitinyl-[E2 ubiquitin-conjugating enzyme]-L-cysteine + [acceptor protein]-L-lysine = [E2 ubiquitin-conjugating enzyme]-L-cysteine + N(6)-ubiquitinyl-[acceptor protein]-L-lysine.. It participates in protein modification; protein ubiquitination. In terms of biological role, E3 ubiquitin-protein ligase that mediates ubiquitination of target proteins, including p53/TP53, TP73, HDAC1 and CDKN1B. Mediates ubiquitination and degradation of p53/TP53; preferentially acts on tetrameric p53/TP53. Catalyzes monoubiquitinates the translesion DNA polymerase POLH. Involved in the ribosome-associated quality control (RQC) pathway, which mediates the extraction of incompletely synthesized nascent chains from stalled ribosomes: RCHY1 acts downstream of NEMF and recognizes CAT tails associated with stalled nascent chains, leading to their ubiquitination and degradation. Has no E3 ubiquitin-protein ligase activity. The sequence is that of RING finger and CHY zinc finger domain-containing protein 1 (RCHY1) from Homo sapiens (Human).